Here is a 102-residue protein sequence, read N- to C-terminus: Pole-localizer protein TmaR (102 aa).

Positions 7–34 form a coiled coil; sequence IINQARRKNKLKRELQDNQKKIRDNQKR.

Belongs to the pole-localizer TmaR family.

It localises to the cytoplasm. Functionally, pole-localizer protein involved in the regulation of several cellular processes. The polypeptide is Pole-localizer protein TmaR (Aliivibrio salmonicida (strain LFI1238) (Vibrio salmonicida (strain LFI1238))).